We begin with the raw amino-acid sequence, 335 residues long: MIEFQNVHKTYRVAGKDIPALHPTSLRVENGQVFGLIGHSGAGKSTLLRLINRLENPSGGTIVVDDEDVTALDASGLRRFRQQVGMIFQHFNLLSSKTVADNVALPLTLAGELSRSDIDRRVAELLDRVGLADHAKKYPAQLSGGQKQRVGIARALATKPKILLCDEATSALDPQTTASVLQLLAEINRELNLTIVLITHEMDVIRRVCDQVAVMDAGVIVEQGPVADVFLHPKHPTTRRFVQEDEQIDENEQRDDFAHVPGRIVRLTFQGDSTYAPLLGTVARETGVDYSILAGRIDRIKDTPYGQLTLAITGGDMEAAFARFTAADVHMEVLR.

An ABC transporter domain is found at 2–242 (IEFQNVHKTY…PKHPTTRRFV (241 aa)). 38 to 45 (GHSGAGKS) lines the ATP pocket.

This sequence belongs to the ABC transporter superfamily. Methionine importer (TC 3.A.1.24) family. The complex is composed of two ATP-binding proteins (MetN), two transmembrane proteins (MetI) and a solute-binding protein (MetQ).

The protein localises to the cell inner membrane. The enzyme catalyses L-methionine(out) + ATP + H2O = L-methionine(in) + ADP + phosphate + H(+). It carries out the reaction D-methionine(out) + ATP + H2O = D-methionine(in) + ADP + phosphate + H(+). In terms of biological role, part of the ABC transporter complex MetNIQ involved in methionine import. Responsible for energy coupling to the transport system. This chain is Methionine import ATP-binding protein MetN 1, found in Pseudomonas fluorescens (strain ATCC BAA-477 / NRRL B-23932 / Pf-5).